Consider the following 313-residue polypeptide: Ribosomal RNA small subunit methyltransferase H (313 aa).

Residues 35–37, Asp55, Phe79, Asp100, and Gln107 each bind S-adenosyl-L-methionine; that span reads GGH.

The protein belongs to the methyltransferase superfamily. RsmH family.

It localises to the cytoplasm. The enzyme catalyses cytidine(1402) in 16S rRNA + S-adenosyl-L-methionine = N(4)-methylcytidine(1402) in 16S rRNA + S-adenosyl-L-homocysteine + H(+). Its function is as follows. Specifically methylates the N4 position of cytidine in position 1402 (C1402) of 16S rRNA. This chain is Ribosomal RNA small subunit methyltransferase H, found in Burkholderia multivorans (strain ATCC 17616 / 249).